A 299-amino-acid polypeptide reads, in one-letter code: MLNEHGRRLLLGPTTQRRRLRQILDREDCVTMATIFDPVSARLAEQLGYEAGLMGGSLASYAVLGAPDLIVLTLTELAEQVHRCTRVSDVPLVVDGDHGYGNALSVMRTVHELDRAGAAAVTIEDTLLPRPYGSSGKPALVSFDEAVARVEAAVAARGDSDLLVLGRTSAATLNGIEDAVARFKAFEAAGVDAIFLPGPQQREQIDAISDAVKVPLLMAGAPEALCDPAYLATRRVKAWSAGHQTFSVALKALHDSMQLVRSGTLSLHLPGQASKQLLEQATGVPEYDEWTRQYLAGGA.

Substrate is bound at residue S57. D95 provides a ligand contact to Mg(2+). Substrate contacts are provided by R167 and H243.

This sequence belongs to the isocitrate lyase/PEP mutase superfamily. Oxaloacetate decarboxylase family. In terms of assembly, homotetramer; dimer of dimers. It depends on Mg(2+) as a cofactor.

It carries out the reaction oxaloacetate + H(+) = pyruvate + CO2. Its function is as follows. Catalyzes the decarboxylation of oxaloacetate into pyruvate. Seems to play a role in maintaining cellular concentrations of bicarbonate and pyruvate. This Paraburkholderia xenovorans (strain LB400) protein is Oxaloacetate decarboxylase.